A 576-amino-acid polypeptide reads, in one-letter code: Arginine--tRNA ligase (576 aa).

The short motif at 128–136 (PTGPMHIGH) is the 'HIGH' region element.

The protein belongs to the class-I aminoacyl-tRNA synthetase family. As to quaternary structure, monomer.

Its subcellular location is the cytoplasm. It catalyses the reaction tRNA(Arg) + L-arginine + ATP = L-arginyl-tRNA(Arg) + AMP + diphosphate. This Rickettsia conorii (strain ATCC VR-613 / Malish 7) protein is Arginine--tRNA ligase.